The primary structure comprises 351 residues: Thiamine-phosphate synthase (351 aa).

The segment at 1 to 128 (MLNSNTKDHE…SKIASEIRYE (128 aa)) is unknown. The interval 129-351 (IYTVEIDLLS…MILKELSHEN (223 aa)) is thiamine-phosphate synthase. 4-amino-2-methyl-5-(diphosphooxymethyl)pyrimidine is bound by residues 180 to 184 (QHRFK) and Asn-212. The Mg(2+) site is built by Asp-213 and Asp-232. A 4-amino-2-methyl-5-(diphosphooxymethyl)pyrimidine-binding site is contributed by Ser-251. A 2-[(2R,5Z)-2-carboxy-4-methylthiazol-5(2H)-ylidene]ethyl phosphate-binding site is contributed by 277 to 279 (TTT). 4-amino-2-methyl-5-(diphosphooxymethyl)pyrimidine is bound at residue Lys-280. Residue Gly-307 participates in 2-[(2R,5Z)-2-carboxy-4-methylthiazol-5(2H)-ylidene]ethyl phosphate binding.

This sequence belongs to the thiamine-phosphate synthase family. Mg(2+) serves as cofactor.

It catalyses the reaction 2-[(2R,5Z)-2-carboxy-4-methylthiazol-5(2H)-ylidene]ethyl phosphate + 4-amino-2-methyl-5-(diphosphooxymethyl)pyrimidine + 2 H(+) = thiamine phosphate + CO2 + diphosphate. The catalysed reaction is 2-(2-carboxy-4-methylthiazol-5-yl)ethyl phosphate + 4-amino-2-methyl-5-(diphosphooxymethyl)pyrimidine + 2 H(+) = thiamine phosphate + CO2 + diphosphate. It carries out the reaction 4-methyl-5-(2-phosphooxyethyl)-thiazole + 4-amino-2-methyl-5-(diphosphooxymethyl)pyrimidine + H(+) = thiamine phosphate + diphosphate. It participates in cofactor biosynthesis; thiamine diphosphate biosynthesis; thiamine phosphate from 4-amino-2-methyl-5-diphosphomethylpyrimidine and 4-methyl-5-(2-phosphoethyl)-thiazole: step 1/1. In terms of biological role, condenses 4-methyl-5-(beta-hydroxyethyl)thiazole monophosphate (THZ-P) and 2-methyl-4-amino-5-hydroxymethyl pyrimidine pyrophosphate (HMP-PP) to form thiamine monophosphate (TMP). The polypeptide is Thiamine-phosphate synthase (Prochlorococcus marinus (strain AS9601)).